The following is a 110-amino-acid chain: Large ribosomal subunit protein uL22 (110 aa).

The protein belongs to the universal ribosomal protein uL22 family. Part of the 50S ribosomal subunit.

Functionally, this protein binds specifically to 23S rRNA; its binding is stimulated by other ribosomal proteins, e.g. L4, L17, and L20. It is important during the early stages of 50S assembly. It makes multiple contacts with different domains of the 23S rRNA in the assembled 50S subunit and ribosome. The globular domain of the protein is located near the polypeptide exit tunnel on the outside of the subunit, while an extended beta-hairpin is found that lines the wall of the exit tunnel in the center of the 70S ribosome. This chain is Large ribosomal subunit protein uL22, found in Methylococcus capsulatus (strain ATCC 33009 / NCIMB 11132 / Bath).